The chain runs to 67 residues: VRDGYIAQPENCVYHCFPGSSGCDTLCKEKGGTSGHCGFKVGHGLACWCNALPDNVGIIVEGEKCHS.

Residues 2–66 (RDGYIAQPEN…GIIVEGEKCH (65 aa)) form the LCN-type CS-alpha/beta domain. Intrachain disulfides connect cysteine 12/cysteine 65, cysteine 16/cysteine 37, cysteine 23/cysteine 47, and cysteine 27/cysteine 49. Residue serine 67 is modified to Serine amide.

This sequence belongs to the long (4 C-C) scorpion toxin superfamily. Sodium channel inhibitor family. Alpha subfamily. Monomer. Expressed by the venom gland.

Its subcellular location is the secreted. Alpha toxins bind voltage-independently at site-3 of sodium channels (Nav) and inhibit the inactivation of the activated channels, thereby blocking neuronal transmission. The dissociation is voltage-dependent. This alpha-like toxin is highly toxic to insects and competes with LqhaIT on binding to insect sodium channels. Differs from classical anti-mammalian alpha-toxins as it inhibits sodium channel inactivation in cell bodies of hippocampus brain neurons, on which the anti-mammalian Lqh2 is inactive, and is unable to affect Nav1.2 in the rat brain, on which Lqh2 is highly active. Moreover, its pharmacological properties are unique in that its binding affinity for insect channels drops &gt;30-fold at pH 8.5 versus pH 6.5, and its rate of association with receptor site-3 on both insect and mammalian sodium channels is 4-15-fold slower compared with LqhaIT and Lqh2. In Leiurus hebraeus (Hebrew deathstalker scorpion), this protein is Alpha-like toxin Lqh3.